A 1312-amino-acid polypeptide reads, in one-letter code: Beta-N-acetylhexosaminidase (1312 aa).

An N-terminal signal peptide occupies residues 1–33 (MKHEKQQRFSIRKYAVGAASVLIGFAFQAQTVA). The segment covering 38–59 (TPTTTENQPTIHTVSDSPQSSE) has biased composition (polar residues). A disordered region spans residues 38–178 (TPTTTENQPT…ATEAGKERAA (141 aa)). A compositionally biased stretch (basic and acidic residues) spans 118–177 (AEKETANKKAEEASPKKEEAKEVDSKESNTDKTDKDKPAKKDEAKAEADKPATEAGKERA). Catalytic domain regions lie at residues 176-616 (RAAT…TPEA) and 621-1046 (EAKR…PAVT). G5 domains follow at residues 1059 to 1138 (NVET…GAPV) and 1150 to 1230 (TTEV…GTMV). The segment at 1244 to 1290 (EEKPKLEIPSQPAPSTAPAEESKVLPQDPAPVVTEKKLPETGTHDSA) is disordered. A compositionally biased stretch (basic and acidic residues) spans 1277–1286 (TEKKLPETGT). The short motif at 1281–1285 (LPETG) is the LPXTG sorting signal element. Position 1284 is a pentaglycyl murein peptidoglycan amidated threonine (Thr1284). Residues 1285 to 1312 (GTHDSAGLVVAGLMSTLAAYGLTKRKED) constitute a propeptide, removed by sortase.

Belongs to the glycosyl hydrolase 20 family.

It localises to the secreted. It is found in the cell wall. It carries out the reaction Hydrolysis of terminal non-reducing N-acetyl-D-hexosamine residues in N-acetyl-beta-D-hexosaminides.. In Streptococcus pneumoniae serotype 4 (strain ATCC BAA-334 / TIGR4), this protein is Beta-N-acetylhexosaminidase (strH).